Here is a 159-residue protein sequence, read N- to C-terminus: Phosphopantetheine adenylyltransferase (159 aa).

Residue Ser9 coordinates substrate. ATP contacts are provided by residues 9 to 10 and His17; that span reads SF. Residues Lys41, Leu73, and Lys87 each coordinate substrate. ATP-binding positions include 88 to 90, Glu98, and 123 to 129; these read GLR and NIHISSS.

Belongs to the bacterial CoaD family. As to quaternary structure, homohexamer. Mg(2+) serves as cofactor.

The protein resides in the cytoplasm. It catalyses the reaction (R)-4'-phosphopantetheine + ATP + H(+) = 3'-dephospho-CoA + diphosphate. The protein operates within cofactor biosynthesis; coenzyme A biosynthesis; CoA from (R)-pantothenate: step 4/5. Reversibly transfers an adenylyl group from ATP to 4'-phosphopantetheine, yielding dephospho-CoA (dPCoA) and pyrophosphate. The polypeptide is Phosphopantetheine adenylyltransferase (Clostridium beijerinckii (strain ATCC 51743 / NCIMB 8052) (Clostridium acetobutylicum)).